The chain runs to 449 residues: Glucose-6-phosphate isomerase (449 aa).

Residue E291 is the Proton donor of the active site. Catalysis depends on residues H312 and K426.

The protein belongs to the GPI family.

The protein resides in the cytoplasm. The catalysed reaction is alpha-D-glucose 6-phosphate = beta-D-fructose 6-phosphate. The protein operates within carbohydrate biosynthesis; gluconeogenesis. Its pathway is carbohydrate degradation; glycolysis; D-glyceraldehyde 3-phosphate and glycerone phosphate from D-glucose: step 2/4. Its function is as follows. Catalyzes the reversible isomerization of glucose-6-phosphate to fructose-6-phosphate. The polypeptide is Glucose-6-phosphate isomerase (Streptococcus agalactiae serotype Ia (strain ATCC 27591 / A909 / CDC SS700)).